An 866-amino-acid chain; its full sequence is Pentatricopeptide repeat-containing protein At1g15510, chloroplastic (866 aa).

The transit peptide at 1–52 (MASSAQSPHFYLNPGKSNSFQSKAYKQRNVNFYWNFGIRRLFLRKSQGLSVL) directs the protein to the chloroplast. PPR repeat units follow at residues 58 to 92 (STHFSNSQLHGLCANGKLEEAMKLLNSMQELRVAV), 93 to 123 (DEDVFVALVRLCEWKRAQEEGSKVYSIALSS), 128 to 158 (GVELGNAFLAMFVRFGNLVDAWYVFGKMSER), 159 to 194 (NLFSWNVLVGGYAKQGYFDEAMCLYHRMLWVGGVKP), 195 to 229 (DVYTFPCVLRTCGGIPDLARGKEVHVHVVRYGYEL), 230 to 260 (DIDVVNALITMYVKCGDVKSARLLFDRMPRR), 261 to 295 (DIISWNAMISGYFENGMCHEGLELFFAMRGLSVDP), 296 to 330 (DLMTLTSVISACELLGDRRLGRDIHAYVITTGFAV), 331 to 365 (DISVCNSLTQMYLNAGSWREAEKLFSRMERKDIVS), 366 to 396 (WTTMISGYEYNFLPDKAIDTYRMMDQDSVKP), 397 to 431 (DEITVAAVLSACATLGDLDTGVELHKLAIKARLIS), 432 to 466 (YVIVANNLINMYSKCKCIDKALDIFHNIPRKNVIS), 467 to 493 (WTSIIAGLRLNNRCFEALIFLRQMKMT), 497 to 531 (NAITLTAALAACARIGALMCGKEIHAHVLRTGVGL), 532 to 561 (DDFLPNALLDMYVRCGRMNTAWSQFNSQKK), 562 to 596 (DVTSWNILLTGYSERGQGSMVVELFDRMVKSRVRP), 597 to 631 (DEITFISLLCGCSKSQMVRQGLMYFSKMEDYGVTP), and 632 to 662 (NLKHYACVVDLLGRAGELQEAHKFIQKMPVT). The segment at 667–742 (VWGALLNACR…DAGCSWVEVK (76 aa)) is type E motif. The segment at 743 to 773 (GKVHAFLSDDKYHPQTKEINTVLEGFYEKMS) is type E(+) motif. The type DYW motif stretch occupies residues 774-866 (EVGLTKISES…FKDGECSCGD (93 aa)).

The protein belongs to the PPR family. PCMP-H subfamily.

The protein resides in the plastid. It is found in the chloroplast. Functionally, regulates the RNA editing of the chloroplast transcript accD, and is essential for the early stages of chloroplast biogenesis. Required for the RNA editing of the chloroplast transcript ndhF. This is Pentatricopeptide repeat-containing protein At1g15510, chloroplastic (PCMP-H73) from Arabidopsis thaliana (Mouse-ear cress).